The sequence spans 156 residues: ATP synthase subunit b (156 aa).

A helical transmembrane segment spans residues 11 to 31; sequence AIAFILFVWFCMKYVWPPLMA.

The protein belongs to the ATPase B chain family. As to quaternary structure, F-type ATPases have 2 components, F(1) - the catalytic core - and F(0) - the membrane proton channel. F(1) has five subunits: alpha(3), beta(3), gamma(1), delta(1), epsilon(1). F(0) has three main subunits: a(1), b(2) and c(10-14). The alpha and beta chains form an alternating ring which encloses part of the gamma chain. F(1) is attached to F(0) by a central stalk formed by the gamma and epsilon chains, while a peripheral stalk is formed by the delta and b chains.

The protein localises to the cell inner membrane. Functionally, f(1)F(0) ATP synthase produces ATP from ADP in the presence of a proton or sodium gradient. F-type ATPases consist of two structural domains, F(1) containing the extramembraneous catalytic core and F(0) containing the membrane proton channel, linked together by a central stalk and a peripheral stalk. During catalysis, ATP synthesis in the catalytic domain of F(1) is coupled via a rotary mechanism of the central stalk subunits to proton translocation. Component of the F(0) channel, it forms part of the peripheral stalk, linking F(1) to F(0). The sequence is that of ATP synthase subunit b from Salmonella agona (strain SL483).